The sequence spans 1549 residues: Ferredoxin-dependent glutamate synthase (1549 aa).

The active-site For GATase activity is cysteine 37. Positions 37–435 constitute a Glutamine amidotransferase type-2 domain; sequence CGVGFIAHLD…PGEMIVLDLQ (399 aa). FMN is bound at residue 1116–1173; sequence LHEVHCLLVENNLREKVILRVDGGLRTGQDVVMAALLGADEYGFGTIAMIAGGCIMAR. Positions 1169, 1175, and 1180 each coordinate [3Fe-4S] cluster.

Belongs to the glutamate synthase family. Monomer. It depends on [3Fe-4S] cluster as a cofactor. FAD is required as a cofactor. The cofactor is FMN.

The protein resides in the plastid. Its subcellular location is the chloroplast stroma. It carries out the reaction 2 oxidized [2Fe-2S]-[ferredoxin] + 2 L-glutamate = L-glutamine + 2 reduced [2Fe-2S]-[ferredoxin] + 2-oxoglutarate + 2 H(+). It functions in the pathway amino-acid biosynthesis; L-glutamate biosynthesis via GLT pathway; L-glutamate from 2-oxoglutarate and L-glutamine (ferredoxin route): step 1/1. The protein operates within energy metabolism; nitrogen metabolism. The chain is Ferredoxin-dependent glutamate synthase (gltB) from Cyanidium caldarium (Red alga).